The following is a 97-amino-acid chain: Aspartyl/glutamyl-tRNA(Asn/Gln) amidotransferase subunit C (97 aa).

Belongs to the GatC family. As to quaternary structure, heterotrimer of A, B and C subunits.

It carries out the reaction L-glutamyl-tRNA(Gln) + L-glutamine + ATP + H2O = L-glutaminyl-tRNA(Gln) + L-glutamate + ADP + phosphate + H(+). The enzyme catalyses L-aspartyl-tRNA(Asn) + L-glutamine + ATP + H2O = L-asparaginyl-tRNA(Asn) + L-glutamate + ADP + phosphate + 2 H(+). In terms of biological role, allows the formation of correctly charged Asn-tRNA(Asn) or Gln-tRNA(Gln) through the transamidation of misacylated Asp-tRNA(Asn) or Glu-tRNA(Gln) in organisms which lack either or both of asparaginyl-tRNA or glutaminyl-tRNA synthetases. The reaction takes place in the presence of glutamine and ATP through an activated phospho-Asp-tRNA(Asn) or phospho-Glu-tRNA(Gln). The polypeptide is Aspartyl/glutamyl-tRNA(Asn/Gln) amidotransferase subunit C (Synechococcus sp. (strain CC9311)).